The sequence spans 286 residues: L-cysteine S-thiosulfotransferase subunit SoxA (286 aa).

Positions 1–26 (MTVSKRFLAPVFAMVGGLVLAFSANA) are cleaved as a signal peptide. The Cytochrome c domain maps to 80–166 (LAVERGADIW…ALTSYIKHQS (87 aa)). Heme contacts are provided by Cys100, Cys103, His104, Cys138, Cys202, Cys205, and His206. Residue Arg243 coordinates substrate. Cys247 contacts heme. Catalysis depends on Cys247, which acts as the Cysteine persulfide intermediate.

It belongs to the SoxA family. In terms of assembly, heterodimer of SoxA and SoxX. Heme is required as a cofactor. Post-translationally, cysteine persulfide at Cys-247.

It localises to the periplasm. It carries out the reaction L-cysteinyl-[SoxY protein] + thiosulfate + 2 Fe(III)-[cytochrome c] = S-sulfosulfanyl-L-cysteinyl-[SoxY protein] + 2 Fe(II)-[cytochrome c] + 2 H(+). It catalyses the reaction S-sulfanyl-L-cysteinyl-[SoxY protein] + thiosulfate + 2 Fe(III)-[cytochrome c] = S-(2-sulfodisulfanyl)-L-cysteinyl-[SoxY protein] + 2 Fe(II)-[cytochrome c] + 2 H(+). In terms of biological role, C-type diheme cytochrome, which is part of the SoxAX cytochrome complex involved in sulfur oxidation. The SoxAX complex catalyzes the formation of a heterodisulfide bond between the conserved cysteine residue on a sulfur carrier SoxYZ complex subunit SoxY and thiosulfate or other inorganic sulfur substrates. This leads to the liberation of two electrons, which may be transferred from the SoxAX complex to another cytochrome c that then channels them into the respiratory electron transport chain. Some electrons may be used for reductive CO(2) fixation. In Pseudaminobacter salicylatoxidans, this protein is L-cysteine S-thiosulfotransferase subunit SoxA.